Here is a 133-residue protein sequence, read N- to C-terminus: S-adenosylmethionine decarboxylase proenzyme (133 aa).

Ser63 (schiff-base intermediate with substrate; via pyruvic acid) is an active-site residue. Ser63 is modified (pyruvic acid (Ser); by autocatalysis). The active-site Proton acceptor; for processing activity is His68. The active-site Proton donor; for catalytic activity is the Cys83.

Belongs to the prokaryotic AdoMetDC family. Type 1 subfamily. Heterotetramer of two alpha and two beta chains arranged as a dimer of alpha/beta heterodimers. The cofactor is pyruvate. Is synthesized initially as an inactive proenzyme. Formation of the active enzyme involves a self-maturation process in which the active site pyruvoyl group is generated from an internal serine residue via an autocatalytic post-translational modification. Two non-identical subunits are generated from the proenzyme in this reaction, and the pyruvate is formed at the N-terminus of the alpha chain, which is derived from the carboxyl end of the proenzyme. The post-translation cleavage follows an unusual pathway, termed non-hydrolytic serinolysis, in which the side chain hydroxyl group of the serine supplies its oxygen atom to form the C-terminus of the beta chain, while the remainder of the serine residue undergoes an oxidative deamination to produce ammonia and the pyruvoyl group blocking the N-terminus of the alpha chain.

It catalyses the reaction S-adenosyl-L-methionine + H(+) = S-adenosyl 3-(methylsulfanyl)propylamine + CO2. It functions in the pathway amine and polyamine biosynthesis; S-adenosylmethioninamine biosynthesis; S-adenosylmethioninamine from S-adenosyl-L-methionine: step 1/1. Functionally, catalyzes the decarboxylation of S-adenosylmethionine to S-adenosylmethioninamine (dcAdoMet), the propylamine donor required for the synthesis of the polyamines spermine and spermidine from the diamine putrescine. The sequence is that of S-adenosylmethionine decarboxylase proenzyme from Acidithiobacillus ferrooxidans (strain ATCC 23270 / DSM 14882 / CIP 104768 / NCIMB 8455) (Ferrobacillus ferrooxidans (strain ATCC 23270)).